The following is a 527-amino-acid chain: Exodeoxyribonuclease 7 large subunit (527 aa).

The tract at residues 499–527 (AGEEGAPPPAAPKKRASRPVVPTKQGSLF) is disordered.

This sequence belongs to the XseA family. As to quaternary structure, heterooligomer composed of large and small subunits.

The protein localises to the cytoplasm. It carries out the reaction Exonucleolytic cleavage in either 5'- to 3'- or 3'- to 5'-direction to yield nucleoside 5'-phosphates.. Its function is as follows. Bidirectionally degrades single-stranded DNA into large acid-insoluble oligonucleotides, which are then degraded further into small acid-soluble oligonucleotides. This is Exodeoxyribonuclease 7 large subunit from Sinorhizobium fredii (strain NBRC 101917 / NGR234).